The sequence spans 20 residues: Neurotoxin BmK 18(2) (20 aa).

The 19-residue stretch at 2-20 folds into the LCN-type CS-alpha/beta domain; sequence RDAYIAEDYDCVYHCARDA.

The protein belongs to the long (4 C-C) scorpion toxin superfamily. Sodium channel inhibitor family. Alpha subfamily. Expressed by the venom gland.

It is found in the secreted. Its function is as follows. Binds to sodium channels (Nav) and inhibits the inactivation of the activated channels, thereby blocking neuronal transmission. The polypeptide is Neurotoxin BmK 18(2) (Olivierus martensii (Manchurian scorpion)).